Consider the following 316-residue polypeptide: Heme oxygenase 2 (316 aa).

Residues 1–12 are compositionally biased toward acidic residues; that stretch reads MSAEVETSEGVD. The segment at 1-29 is disordered; that stretch reads MSAEVETSEGVDESEKKNSGALEKENQMR. S2 carries the N-acetylserine modification. A Phosphoserine modification is found at S2. The segment covering 13–27 has biased composition (basic and acidic residues); it reads ESEKKNSGALEKENQ. Residue H45 participates in heme b binding. 2 HRM repeats span residues 264-269 and 281-286; these read KCPFYA and SCPFRT. An S-nitrosocysteine mark is found at C265 and C282.

The protein belongs to the heme oxygenase family. In terms of processing, S-nitrosylated by BLVRB.

Its subcellular location is the microsome. The protein resides in the endoplasmic reticulum. The enzyme catalyses heme b + 3 reduced [NADPH--hemoprotein reductase] + 3 O2 = biliverdin IXalpha + CO + Fe(2+) + 3 oxidized [NADPH--hemoprotein reductase] + 3 H2O + H(+). Its function is as follows. Heme oxygenase cleaves the heme ring at the alpha methene bridge to form biliverdin. Biliverdin is subsequently converted to bilirubin by biliverdin reductase. Under physiological conditions, the activity of heme oxygenase is highest in the spleen, where senescent erythrocytes are sequestrated and destroyed. Heme oxygenase 2 could be implicated in the production of carbon monoxide in brain where it could act as a neurotransmitter. The protein is Heme oxygenase 2 (HMOX2) of Macaca fascicularis (Crab-eating macaque).